Consider the following 194-residue polypeptide: Peptidyl-tRNA hydrolase (194 aa).

TRNA is bound at residue Tyr-17. His-22 serves as the catalytic Proton acceptor. Residues Tyr-69, Asn-71, and Asn-117 each coordinate tRNA.

Belongs to the PTH family. As to quaternary structure, monomer.

It localises to the cytoplasm. It carries out the reaction an N-acyl-L-alpha-aminoacyl-tRNA + H2O = an N-acyl-L-amino acid + a tRNA + H(+). Hydrolyzes ribosome-free peptidyl-tRNAs (with 1 or more amino acids incorporated), which drop off the ribosome during protein synthesis, or as a result of ribosome stalling. Its function is as follows. Catalyzes the release of premature peptidyl moieties from peptidyl-tRNA molecules trapped in stalled 50S ribosomal subunits, and thus maintains levels of free tRNAs and 50S ribosomes. The polypeptide is Peptidyl-tRNA hydrolase (Paenarthrobacter aurescens (strain TC1)).